The following is a 113-amino-acid chain: Prostate and testis expressed protein 2 (113 aa).

The N-terminal stretch at Met-1–Ala-26 is a signal peptide. Positions Ile-29–Pro-110 constitute a UPAR/Ly6 domain. 4 cysteine pairs are disulfide-bonded: Cys-31–Cys-57, Cys-34–Cys-42, Cys-49–Cys-80, and Cys-84–Cys-101.

It belongs to the PATE family. As to expression, isoform 1 and isoform 2 are expressed in prostate and testis. Isoform 2 is expressed in male and female brain at equivalent levels, in particular in cerebellum, cerebral cortex, corpus callosum, occipital, parrietal and temporal lobes, and pons, but not in amygdala, cerebral peduncle, hippocampus and thalamus.

The protein resides in the secreted. In Homo sapiens (Human), this protein is Prostate and testis expressed protein 2 (PATE2).